The following is a 410-amino-acid chain: Tryptophan synthase beta chain (410 aa).

The residue at position 98 (K98) is an N6-(pyridoxal phosphate)lysine.

This sequence belongs to the TrpB family. In terms of assembly, tetramer of two alpha and two beta chains. Pyridoxal 5'-phosphate is required as a cofactor.

The enzyme catalyses (1S,2R)-1-C-(indol-3-yl)glycerol 3-phosphate + L-serine = D-glyceraldehyde 3-phosphate + L-tryptophan + H2O. Its pathway is amino-acid biosynthesis; L-tryptophan biosynthesis; L-tryptophan from chorismate: step 5/5. Its function is as follows. The beta subunit is responsible for the synthesis of L-tryptophan from indole and L-serine. This is Tryptophan synthase beta chain from Roseobacter denitrificans (strain ATCC 33942 / OCh 114) (Erythrobacter sp. (strain OCh 114)).